Consider the following 529-residue polypeptide: MRFNDITRGSGLEQHGITNPNLIYWTSPTSVLYEQVVRRGEGLISHLGALTVKTGHYTGRAANDKFIVDEPESSSRINWGKVNRPFPPESFDHLYKKMTSYMQGRDLFVQDCFAGASPEHRIPVRIITERAWHALFARNMFLRATQEELLTHNTEFTVIDLPAFHAQPKVDGTNSEAFIIINFARKLVIIGGTSYAGEIKKSIFTVLNYLLPQKGVMSMHCSANAGEKGEVAIFFGLSGTGKTTLSAAPNRLLIGDDEHGWDDAGVFNFEGGCYAKVINLSPQSEPEIYQCTRKFGTILENVAIDTISRRIDLDDASFTENTRASYPITHIPNIVGEGCGGHPNHVIMLTCDAFGVLPPIARLTPAQAMYHFLSGYTAKVAGTEAGVTEPQATFSACFGAPFMALRPSLYADLLGKKIASHKVSCWLVNTGWSGGGPGIGGRMKIAYSRALVNAALDGTLGAGSFVKDSVFGLDIPSACPGLPADILNPRNVWSDKSAYDATAHKLVEMFRHNFEQFKATTSPEIASVL.

R60, Y195, and K201 together coordinate substrate. Residues K201, H220, and 236–244 contribute to the ATP site; that span reads GLSGTGKTT. K201 and H220 together coordinate Mn(2+). Position 257 (D257) interacts with Mn(2+). ATP-binding residues include E285, R323, and S448. Position 323 (R323) interacts with substrate.

It belongs to the phosphoenolpyruvate carboxykinase (ATP) family. It depends on Mn(2+) as a cofactor.

It localises to the cytoplasm. The enzyme catalyses oxaloacetate + ATP = phosphoenolpyruvate + ADP + CO2. It participates in carbohydrate biosynthesis; gluconeogenesis. Involved in the gluconeogenesis. Catalyzes the conversion of oxaloacetate (OAA) to phosphoenolpyruvate (PEP) through direct phosphoryl transfer between the nucleoside triphosphate and OAA. The sequence is that of Phosphoenolpyruvate carboxykinase (ATP) from Geobacter sp. (strain M21).